The chain runs to 852 residues: Bifunctional isopimaradiene synthase, chloroplastic (852 aa).

Residues 1-53 (HHLTANTQSIPHFSTTLNAGSSARKRRSLYLRWGKGSNKIIACVGEGATSVPY) constitute a chloroplast transit peptide. Lys-252 contributes to the substrate binding site. Positions 385 and 387 each coordinate Mg(2+). A DXDD motif motif is present at residues 385–388 (DIDD). Lys-472 is a substrate binding site. Residues Asp-604, Asp-608, Asn-748, Thr-752, and Glu-756 each contribute to the Mg(2+) site. A DDXXD motif motif is present at residues 604 to 608 (DDLYD).

Belongs to the terpene synthase family. Tpsd subfamily. Mg(2+) is required as a cofactor.

Its subcellular location is the plastid. It is found in the chloroplast. The enzyme catalyses (2E,6E,10E)-geranylgeranyl diphosphate = (+)-copalyl diphosphate. It catalyses the reaction (+)-copalyl diphosphate = isopimara-7,15-diene + diphosphate. The protein operates within terpene metabolism; oleoresin biosynthesis. Its function is as follows. Involved in defensive oleoresin formation in conifers in response to insect attack or other injury. Involved in diterpene (C20) olefins biosynthesis. Bifunctional enzyme that catalyzes two sequential cyclizations of geranylgeranyl diphosphate (GGPP) to isopimara-7,15-diene. The chain is Bifunctional isopimaradiene synthase, chloroplastic (TPS-ISO) from Abies balsamea (Balsam fir).